The sequence spans 128 residues: Large ribosomal subunit protein bL21 (128 aa).

Positions 104–128 (GKTPTVGPRPKKEKVVEPAEGEGDH) are disordered. Residues 116-128 (EKVVEPAEGEGDH) are compositionally biased toward basic and acidic residues.

Belongs to the bacterial ribosomal protein bL21 family. As to quaternary structure, part of the 50S ribosomal subunit. Contacts protein L20.

This protein binds to 23S rRNA in the presence of protein L20. In Nitrobacter hamburgensis (strain DSM 10229 / NCIMB 13809 / X14), this protein is Large ribosomal subunit protein bL21.